A 1612-amino-acid chain; its full sequence is DNA topoisomerase 2-beta (1612 aa).

Alanine 2 bears the N-acetylalanine mark. Lysine 3 is modified (N6-acetyllysine). Glycyl lysine isopeptide (Lys-Gly) (interchain with G-Cter in SUMO2) cross-links involve residues lysine 21 and lysine 22. ATP-binding positions include asparagine 100, asparagine 129, and 157–159 (SSN). Glycyl lysine isopeptide (Lys-Gly) (interchain with G-Cter in SUMO2) cross-links involve residues lysine 165 and lysine 166. Residue 170-177 (GRNGYGAK) coordinates ATP. Residues lysine 216 and lysine 287 each participate in a glycyl lysine isopeptide (Lys-Gly) (interchain with G-Cter in SUMO2) cross-link. Positions 351 to 353 (KKK) are interaction with DNA. Residues lysine 355 and lysine 361 each participate in a glycyl lysine isopeptide (Lys-Gly) (interchain with G-Cter in SUMO2) cross-link. 385–387 (QTK) provides a ligand contact to ATP. Residues lysine 425, lysine 427, and lysine 434 each participate in a glycyl lysine isopeptide (Lys-Gly) (interchain with G-Cter in SUMO2) cross-link. In terms of domain architecture, Toprim spans 464–581 (CTLILTEGDS…SLLKHGFLEE (118 aa)). Residues glutamate 470, aspartate 550, and aspartate 552 each coordinate Mg(2+). Residues lysine 588, lysine 593, lysine 623, lysine 631, lysine 634, lysine 664, and lysine 700 each participate in a glycyl lysine isopeptide (Lys-Gly) (interchain with G-Cter in SUMO2) cross-link. A Topo IIA-type catalytic domain is found at 724 to 1177 (IPSLVDGFKP…SPSDLWKEDL (454 aa)). Tyrosine 814 acts as the O-(5'-phospho-DNA)-tyrosine intermediate in catalysis. An interaction with DNA region spans residues 999 to 1008 (KLQTTLTCNS). Lysine 1080 is covalently cross-linked (Glycyl lysine isopeptide (Lys-Gly) (interchain with G-Cter in SUMO2)). The segment at 1098 to 1128 (AWKEAQEKAAEEEDSQNQHDDSSSDSGTPSG) is disordered. Residues lysine 1202, lysine 1205, lysine 1214, and lysine 1215 each participate in a glycyl lysine isopeptide (Lys-Gly) (interchain with G-Cter in SUMO2) cross-link. A Phosphoserine modification is found at serine 1224. Glycyl lysine isopeptide (Lys-Gly) (interchain with G-Cter in SUMO2) cross-links involve residues lysine 1238, lysine 1250, and lysine 1259. The interval 1245–1586 (LLKKKKGDPD…FTSEPPALPR (342 aa)) is disordered. Threonine 1280 carries the post-translational modification Phosphothreonine. Residues lysine 1311 and lysine 1315 each participate in a glycyl lysine isopeptide (Lys-Gly) (interchain with G-Cter in SUMO2) cross-link. Basic and acidic residues-rich tracts occupy residues 1322–1332 (PWSDDESKSES) and 1346–1358 (SLLR…RPKY). Phosphoserine occurs at positions 1324, 1328, 1330, 1332, and 1346. Residue tyrosine 1358 is modified to Phosphotyrosine. The span at 1362–1379 (FSEEEDDDAAAADDSNDL) shows a compositional bias: acidic residues. A phosphoserine mark is found at serine 1363 and serine 1376. Lysine 1385 participates in a covalent cross-link: Glycyl lysine isopeptide (Lys-Gly) (interchain with G-Cter in SUMO2). Residue serine 1387 is modified to Phosphoserine. Threonine 1390 is subject to Phosphothreonine. The residue at position 1400 (serine 1400) is a Phosphoserine. Residue tyrosine 1408 is modified to Phosphotyrosine. Phosphoserine is present on serine 1411. Residues 1417 to 1429 (ATPEKSSNDKKSQ) are compositionally biased toward basic and acidic residues. Lysine 1427 is covalently cross-linked (Glycyl lysine isopeptide (Lys-Gly) (interchain with G-Cter in SUMO2)). A phosphoserine mark is found at serine 1428, serine 1439, and serine 1441. Lysine 1443 is covalently cross-linked (Glycyl lysine isopeptide (Lys-Gly) (interchain with G-Cter in SUMO2)). A compositionally biased stretch (basic and acidic residues) spans 1443–1453 (KSEDDSAKFDS). 3 positions are modified to phosphoserine: serine 1448, serine 1453, and serine 1460. Residue lysine 1477 forms a Glycyl lysine isopeptide (Lys-Gly) (interchain with G-Cter in SUMO2) linkage. The segment at 1493-1499 (KAKRAPK) is interaction with PLSCR1. A phosphoserine mark is found at serine 1509, serine 1511, and serine 1513. Over residues 1526 to 1536 (GKGRGAKKRKA) the composition is skewed to basic residues. Residues serine 1537 and serine 1539 each carry the phosphoserine modification. The segment covering 1550–1561 (KPSKTASKKPKK) has biased composition (basic residues). At threonine 1562 the chain carries Phosphothreonine. Residues serine 1563 and serine 1568 each carry the phosphoserine modification. Tyrosine 1596 is subject to Phosphotyrosine. Serine 1600 bears the Phosphoserine mark.

It belongs to the type II topoisomerase family. In terms of assembly, homodimer. Interacts with KIAA1210. Interacts with PLSCR1. The cofactor is Mg(2+). Mn(2+) is required as a cofactor. Requires Ca(2+) as cofactor.

The protein localises to the nucleus. The protein resides in the nucleolus. Its subcellular location is the nucleoplasm. The catalysed reaction is ATP-dependent breakage, passage and rejoining of double-stranded DNA.. Functionally, key decatenating enzyme that alters DNA topology by binding to two double-stranded DNA molecules, generating a double-stranded break in one of the strands, passing the intact strand through the broken strand, and religating the broken strand. Plays a role in B-cell differentiation. The sequence is that of DNA topoisomerase 2-beta (Top2b) from Mus musculus (Mouse).